The sequence spans 839 residues: Protein translocase subunit SecA (839 aa).

ATP contacts are provided by residues Q85, 103 to 107 (GEGKT), and D493. A compositionally biased stretch (basic and acidic residues) spans 780-790 (QIHEQERERAS). The disordered stretch occupies residues 780-839 (QIHEQERERASQRATTAAPQNIQSQQSANTDDLPKVERNEACPCGSGKKFKNCHGRKSFS). Over residues 791 to 809 (QRATTAAPQNIQSQQSANT) the composition is skewed to polar residues. The Zn(2+) site is built by C821, C823, C832, and H833. A compositionally biased stretch (basic residues) spans 827–839 (KKFKNCHGRKSFS).

Belongs to the SecA family. As to quaternary structure, monomer and homodimer. Part of the essential Sec protein translocation apparatus which comprises SecA, SecYEG and auxiliary proteins SecDF. Other proteins may also be involved. It depends on Zn(2+) as a cofactor.

The protein resides in the cell membrane. Its subcellular location is the cytoplasm. It catalyses the reaction ATP + H2O + cellular proteinSide 1 = ADP + phosphate + cellular proteinSide 2.. Part of the Sec protein translocase complex. Interacts with the SecYEG preprotein conducting channel. Has a central role in coupling the hydrolysis of ATP to the transfer of proteins into and across the cell membrane, serving as an ATP-driven molecular motor driving the stepwise translocation of polypeptide chains across the membrane. The chain is Protein translocase subunit SecA from Streptococcus pyogenes serotype M3 (strain ATCC BAA-595 / MGAS315).